The primary structure comprises 459 residues: Glycosyl hydrolase family 109 protein (459 aa).

The segment at residues 1–31 is a signal peptide (tat-type signal); sequence MHNIHRRHFLKAAGAVTAGLITANITASTHA. Residues 64 to 65, D86, 135 to 138, 155 to 156, and N184 contribute to the NAD(+) site; these read ER, WEWH, and EV. Substrate contacts are provided by residues Y213, R232, 244–247, and Y326; that span reads YPTH. Y244 is a binding site for NAD(+).

This sequence belongs to the Gfo/Idh/MocA family. Glycosyl hydrolase 109 subfamily. Requires NAD(+) as cofactor. Post-translationally, predicted to be exported by the Tat system. The position of the signal peptide cleavage has not been experimentally proven.

Its function is as follows. Glycosidase. In Shewanella putrefaciens (strain CN-32 / ATCC BAA-453), this protein is Glycosyl hydrolase family 109 protein.